The chain runs to 316 residues: 4-hydroxy-3-methylbut-2-enyl diphosphate reductase (316 aa).

Position 12 (C12) interacts with [4Fe-4S] cluster. (2E)-4-hydroxy-3-methylbut-2-enyl diphosphate contacts are provided by H41 and H74. The dimethylallyl diphosphate site is built by H41 and H74. Positions 41 and 74 each coordinate isopentenyl diphosphate. C96 serves as a coordination point for [4Fe-4S] cluster. H124 is a (2E)-4-hydroxy-3-methylbut-2-enyl diphosphate binding site. H124 is a binding site for dimethylallyl diphosphate. Isopentenyl diphosphate is bound at residue H124. Residue E126 is the Proton donor of the active site. Residue T167 coordinates (2E)-4-hydroxy-3-methylbut-2-enyl diphosphate. Residue C197 participates in [4Fe-4S] cluster binding. The (2E)-4-hydroxy-3-methylbut-2-enyl diphosphate site is built by S225, S226, N227, and S269. The dimethylallyl diphosphate site is built by S225, S226, N227, and S269. 4 residues coordinate isopentenyl diphosphate: S225, S226, N227, and S269.

It belongs to the IspH family. In terms of assembly, homodimer. Requires [4Fe-4S] cluster as cofactor.

It catalyses the reaction isopentenyl diphosphate + 2 oxidized [2Fe-2S]-[ferredoxin] + H2O = (2E)-4-hydroxy-3-methylbut-2-enyl diphosphate + 2 reduced [2Fe-2S]-[ferredoxin] + 2 H(+). The enzyme catalyses dimethylallyl diphosphate + 2 oxidized [2Fe-2S]-[ferredoxin] + H2O = (2E)-4-hydroxy-3-methylbut-2-enyl diphosphate + 2 reduced [2Fe-2S]-[ferredoxin] + 2 H(+). The protein operates within isoprenoid biosynthesis; dimethylallyl diphosphate biosynthesis; dimethylallyl diphosphate from (2E)-4-hydroxy-3-methylbutenyl diphosphate: step 1/1. Its pathway is isoprenoid biosynthesis; isopentenyl diphosphate biosynthesis via DXP pathway; isopentenyl diphosphate from 1-deoxy-D-xylulose 5-phosphate: step 6/6. Catalyzes the conversion of 1-hydroxy-2-methyl-2-(E)-butenyl 4-diphosphate (HMBPP) into a mixture of isopentenyl diphosphate (IPP) and dimethylallyl diphosphate (DMAPP). Acts in the terminal step of the DOXP/MEP pathway for isoprenoid precursor biosynthesis. The sequence is that of 4-hydroxy-3-methylbut-2-enyl diphosphate reductase from Cronobacter sakazakii (strain ATCC BAA-894) (Enterobacter sakazakii).